Consider the following 402-residue polypeptide: 26S proteasome non-ATPase regulatory subunit 4 homolog (402 aa).

The VWFA domain maps to 5–189 (ATMICIDNSE…LSDVLISTPI (185 aa)). The 20-residue stretch at 221 to 240 (NVDPELALALRLSMEEERAR) folds into the UIM 1 domain. Residues 241–261 (QEAIAKKAAEESSGAENKDHA) show a composition bias toward basic and acidic residues. 2 disordered regions span residues 241 to 292 (QEAI…EDDD) and 302 to 321 (MSMEEGSSGAAAADAAMAEA). UIM domains follow at residues 291-310 (DDAQLLQQALAMSMEEGSSG) and 323-342 (VDDQDLALALQMSVQDAGGS). Residues 363-402 (SLPGVDPNDPSVKDLLASLHGQGEQEKKEDKSDKPEDEKK) form a disordered region. Positions 385 to 402 (GEQEKKEDKSDKPEDEKK) are enriched in basic and acidic residues.

Belongs to the proteasome subunit S5A family. Component of the 19S regulatory particle (RP/PA700) base subcomplex of the 26S proteasome. The 26S proteasome is composed of a core protease (CP), known as the 20S proteasome, capped at one or both ends by the 19S regulatory particle (RP/PA700). The RP/PA700 complex is composed of at least 17 different subunits in two subcomplexes, the base and the lid, which form the portions proximal and distal to the 20S proteolytic core, respectively. Interacts with PI4KG4.

In terms of biological role, plays a role in maintaining the structural integrity of the 19S regulatory particle (RP), subcomplex of the 26S proteasome. Plays a major role in both the direct and indirect recognition of ubiquitinated substrates of ubiquitin/26S proteasome-mediated proteolysis (UPP). Binds and presumably selects ubiquitin-conjugates for destruction. This is 26S proteasome non-ATPase regulatory subunit 4 homolog from Oryza sativa subsp. japonica (Rice).